A 254-amino-acid chain; its full sequence is Small ribosomal subunit protein uS2 (254 aa).

The protein belongs to the universal ribosomal protein uS2 family.

The sequence is that of Small ribosomal subunit protein uS2 from Borrelia duttonii (strain Ly).